A 161-amino-acid polypeptide reads, in one-letter code: Photosystem II extrinsic protein V (161 aa).

A signal peptide spans 1–25; that stretch reads MKKFFISVVFIVLLTFTTFINSATA. Residues Cys-61, Cys-64, His-65, and His-116 each contribute to the heme c site.

It belongs to the cytochrome c family. PsbV subfamily. In terms of assembly, PSII is composed of 1 copy each of membrane proteins PsbA, PsbB, PsbC, PsbD, PsbE, PsbF, PsbH, PsbI, PsbJ, PsbK, PsbL, PsbM, PsbT, PsbX, PsbY, PsbZ, Psb30/Ycf12, peripheral proteins PsbO, CyanoQ (PsbQ), PsbU, PsbV and a large number of cofactors. It forms dimeric complexes. The cofactor is heme c.

Its subcellular location is the cellular thylakoid membrane. One of the extrinsic, lumenal subunits of photosystem II (PSII). PSII is a light-driven water plastoquinone oxidoreductase, using light energy to abstract electrons from H(2)O, generating a proton gradient subsequently used for ATP formation. The extrinsic proteins stabilize the structure of photosystem II oxygen-evolving complex (OEC), the ion environment of oxygen evolution and protect the OEC against heat-induced inactivation. Low-potential cytochrome c that plays a role in the OEC of PSII. This Trichodesmium erythraeum (strain IMS101) protein is Photosystem II extrinsic protein V.